The primary structure comprises 328 residues: 4-hydroxythreonine-4-phosphate dehydrogenase (328 aa).

Substrate is bound by residues histidine 135 and threonine 136. A divalent metal cation-binding residues include histidine 165, histidine 210, and histidine 265. Residues lysine 273, asparagine 282, and arginine 291 each contribute to the substrate site.

The protein belongs to the PdxA family. As to quaternary structure, homodimer. Zn(2+) serves as cofactor. It depends on Mg(2+) as a cofactor. Co(2+) is required as a cofactor.

The protein resides in the cytoplasm. It catalyses the reaction 4-(phosphooxy)-L-threonine + NAD(+) = 3-amino-2-oxopropyl phosphate + CO2 + NADH. Its pathway is cofactor biosynthesis; pyridoxine 5'-phosphate biosynthesis; pyridoxine 5'-phosphate from D-erythrose 4-phosphate: step 4/5. Functionally, catalyzes the NAD(P)-dependent oxidation of 4-(phosphooxy)-L-threonine (HTP) into 2-amino-3-oxo-4-(phosphooxy)butyric acid which spontaneously decarboxylates to form 3-amino-2-oxopropyl phosphate (AHAP). The protein is 4-hydroxythreonine-4-phosphate dehydrogenase of Enterobacter sp. (strain 638).